Reading from the N-terminus, the 230-residue chain is Small ribosomal subunit protein uS3 (230 aa).

Residues 39–107 form the KH type-2 domain; it reads VRKFLVEKLQ…PAQINIAEIR (69 aa).

Belongs to the universal ribosomal protein uS3 family. As to quaternary structure, part of the 30S ribosomal subunit. Forms a tight complex with proteins S10 and S14.

Its function is as follows. Binds the lower part of the 30S subunit head. Binds mRNA in the 70S ribosome, positioning it for translation. The polypeptide is Small ribosomal subunit protein uS3 (Shewanella putrefaciens (strain CN-32 / ATCC BAA-453)).